Here is a 604-residue protein sequence, read N- to C-terminus: UvrABC system protein C (604 aa).

The GIY-YIG domain maps to 10-89 (ELPGVYLMKD…VKKNRPHYNI (80 aa)). In terms of domain architecture, UVR spans 199–234 (SGTIKELQEKMNIHAIAQEYESAAVIRDQIDALKSL).

This sequence belongs to the UvrC family. As to quaternary structure, interacts with UvrB in an incision complex.

The protein localises to the cytoplasm. In terms of biological role, the UvrABC repair system catalyzes the recognition and processing of DNA lesions. UvrC both incises the 5' and 3' sides of the lesion. The N-terminal half is responsible for the 3' incision and the C-terminal half is responsible for the 5' incision. In Methanococcoides burtonii (strain DSM 6242 / NBRC 107633 / OCM 468 / ACE-M), this protein is UvrABC system protein C.